A 218-amino-acid chain; its full sequence is UPF0126 membrane protein SCO4104 (218 aa).

Helical transmembrane passes span 8 to 28, 37 to 57, 64 to 84, 91 to 111, 118 to 138, 154 to 174, and 179 to 199; these read LLALDLTGTFAFGLNGALTAV, GVVVLGMITALGGGVIRDVLI, AFLDWRYYTLAAAGGLLAFAV, LEPAITVLDAVGLSTFAVIGA, GLAVVPAMLLGVITAVGGGTI, LYAIPALAGAAVTVATTETGV, and AALGAAAVCFLIRMLGLHFGI.

This sequence belongs to the UPF0126 family.

Its subcellular location is the cell membrane. This is UPF0126 membrane protein SCO4104 from Streptomyces coelicolor (strain ATCC BAA-471 / A3(2) / M145).